The sequence spans 115 residues: Con-Ins G1b (115 aa).

The N-terminal stretch at 1–24 (MTTSFYFLLMALGLLLYVCQSSFG) is a signal peptide. Positions 25-29 (NQHTR) are excised as a propeptide. Pro-34 is modified (4-hydroxyproline; partial). Cystine bridges form between Cys-38/Cys-101, Cys-50/Cys-114, and Cys-100/Cys-105. Glu-41 is modified (4-carboxyglutamate). A propeptide spans 52–94 (RKRNDAGEKRGRASPLWQRRGFLSKLKARAKRNGAFHLPRDGR) (c peptide). Glu-98 carries the post-translational modification 4-carboxyglutamate. Position 104 is a 4-hydroxyproline; partial (Pro-104). Glu-109 carries the 4-carboxyglutamate; partial modification. At Cys-114 the chain carries Cysteine amide.

It belongs to the insulin family. As to quaternary structure, heterodimer of A and B chains; disulfide-linked. As to expression, expressed by the venom gland.

The protein localises to the secreted. Its function is as follows. This venom insulin, from a fish-hunting cone snail, facilitates prey capture by rapidly inducing hypoglycemic shock. It is one of the smallest known insulin found in nature and lacks the C-terminal segment of the B chain that, in human insulin, mediates engagement of the insulin receptor (INSR) and assembly of the hormone's hexameric storage form. Despite lacking this segment, it both binds and activates human insulin receptor (long isoform (HIR-B) of INSR) with only a 10-fold lower potency. In vivo, intraperitoneal injection of this peptide into zebrafish lowers blood glucose with the same potency than human insulin. In addition, when applied to water, this peptide reduces overall locomotor activity of zebrafish larvae, observed as a significant decrease in the percentage of time spent swimming and movement frequency. The chain is Con-Ins G1b from Conus geographus (Geography cone).